The sequence spans 187 residues: MADEQNLDNRAPEETPAAEGTSAGEDLAARVQALEEQLAAAQDQALRAAAELQNVRRRAEQDVEKAHKFALERFAQDLLGVVDSLERGIELSDPADESIRPMREGMELTLKMFHDVLRRYQLEQLDPHGEPFNPEHHQAMAMEESDSAEPGSVLKVFQKGYLLSGRLLRPAMVVVSKAPTPSNDEQA.

The disordered stretch occupies residues 1–25 (MADEQNLDNRAPEETPAAEGTSAGE).

The protein belongs to the GrpE family. Homodimer.

The protein localises to the cytoplasm. In terms of biological role, participates actively in the response to hyperosmotic and heat shock by preventing the aggregation of stress-denatured proteins, in association with DnaK and GrpE. It is the nucleotide exchange factor for DnaK and may function as a thermosensor. Unfolded proteins bind initially to DnaJ; upon interaction with the DnaJ-bound protein, DnaK hydrolyzes its bound ATP, resulting in the formation of a stable complex. GrpE releases ADP from DnaK; ATP binding to DnaK triggers the release of the substrate protein, thus completing the reaction cycle. Several rounds of ATP-dependent interactions between DnaJ, DnaK and GrpE are required for fully efficient folding. The sequence is that of Protein GrpE from Azotobacter vinelandii (strain DJ / ATCC BAA-1303).